The chain runs to 333 residues: Phosphoribosylformylglycinamidine cyclo-ligase (333 aa).

This sequence belongs to the AIR synthase family.

It is found in the cytoplasm. The enzyme catalyses 2-formamido-N(1)-(5-O-phospho-beta-D-ribosyl)acetamidine + ATP = 5-amino-1-(5-phospho-beta-D-ribosyl)imidazole + ADP + phosphate + H(+). Its pathway is purine metabolism; IMP biosynthesis via de novo pathway; 5-amino-1-(5-phospho-D-ribosyl)imidazole from N(2)-formyl-N(1)-(5-phospho-D-ribosyl)glycinamide: step 2/2. The polypeptide is Phosphoribosylformylglycinamidine cyclo-ligase (Methanosarcina barkeri (strain Fusaro / DSM 804)).